Consider the following 150-residue polypeptide: Cell division protein SepF (150 aa).

The segment at 26–45 is disordered; the sequence is DREEIPEEHESKDRTAYQSK.

This sequence belongs to the SepF family. In terms of assembly, homodimer. Interacts with FtsZ.

The protein resides in the cytoplasm. Cell division protein that is part of the divisome complex and is recruited early to the Z-ring. Probably stimulates Z-ring formation, perhaps through the cross-linking of FtsZ protofilaments. Its function overlaps with FtsA. This Bacillus licheniformis (strain ATCC 14580 / DSM 13 / JCM 2505 / CCUG 7422 / NBRC 12200 / NCIMB 9375 / NCTC 10341 / NRRL NRS-1264 / Gibson 46) protein is Cell division protein SepF.